The chain runs to 180 residues: Large ribosomal subunit protein bL19 (180 aa).

The protein belongs to the bacterial ribosomal protein bL19 family.

Its function is as follows. This protein is located at the 30S-50S ribosomal subunit interface and may play a role in the structure and function of the aminoacyl-tRNA binding site. This is Large ribosomal subunit protein bL19 from Allorhizobium ampelinum (strain ATCC BAA-846 / DSM 112012 / S4) (Agrobacterium vitis (strain S4)).